A 62-amino-acid chain; its full sequence is UPF0434 protein Fphi_1862 (62 aa).

The protein belongs to the UPF0434 family.

The chain is UPF0434 protein Fphi_1862 from Francisella philomiragia subsp. philomiragia (strain ATCC 25017 / CCUG 19701 / FSC 153 / O#319-036).